A 448-amino-acid chain; its full sequence is Protein giant (448 aa).

Disordered stretches follow at residues methionine 23–glutamine 47, glutamine 83–threonine 134, valine 238–lysine 259, and isoleucine 298–serine 363. Positions histidine 30–glutamine 47 are enriched in low complexity. The segment covering aspartate 100 to arginine 112 has biased composition (basic and acidic residues). The segment covering proline 115–threonine 134 has biased composition (low complexity). Residues isoleucine 298 to asparagine 310 show a composition bias toward polar residues. Positions serine 318–serine 333 are enriched in low complexity. The region spanning aspartate 384–threonine 447 is the bZIP domain. Residues arginine 390 to arginine 406 form a basic motif region. The tract at residues isoleucine 407–isoleucine 414 is leucine-zipper.

The protein belongs to the bZIP family. As to quaternary structure, homodimer or heterodimer. In terms of processing, phosphorylated at multiple sites.

It is found in the nucleus. Represses the expression of both the krueppel and knirps segmentation gap genes. Binds, in vitro, to the krueppel regulatory elements CD1 and CD2. It is required in the early embryo for the development of portions of the head and abdomen. This is Protein giant (gt) from Drosophila melanogaster (Fruit fly).